The sequence spans 899 residues: MEPVTKWSPKQVVDWTRGLDDCLQQYVHKFEREKINGEQLLQISHQDLEELGVTRIGHQELVLEAVDLLCALNYGLETDNMKNLVLKLRASSHNLQNYISSRRKSPAYDGNTSRKAPNEFLTSVVELIGAAKALLAWLDRAPFTGITDFSVTKNKIIQLCLDLTTTVQKDCFVAEMEDKVLTVVKVLNGICDKTIRSTTDPVMSQCACLEEVHLPNIKPGEGLGMYIKSTYDGLHVITGTTENSPADRSQKIHAGDEVIQVNQQTVVGWQLKNLVKKLRENPTGVVLLLKKRPTGSFNFTPAPLKNLRWKPPLVQTSPPPATTQSPESTMDTSLKKEKSAILDLYIPPPPAVPYSPRDENGSFVYGGSSKCKQPLPGPKGSESPNSFLDQESRRRRFTIADSDQLPGYSVETNILPTKMREKTPSYGKPRPLSMPADGNWMGIVDPFARPRGHGRKAFVSTKMTSYMAIDGSALVPLRQKPRRKTQGFLTMSRRRISCKDLGHADCQGWLYKKKEKGSFLSNKWKKFWVILKGSSLYWYSNQMAEKADGFVNLPDFTVERASECKKKHAFKISHPQIKTFYFAAENVQEMNVWLNKLGSAVIHQESTTKDEECYSESEQEDPEIAAETPPPPHASQTQSLTAQQASSSSPSLSGTSYSFSSLENTVKTPSSFPSSLSKERQSLPDTVNSLSAAEDEGQPITFAVQVHSPVPSEAGIHKALENSFVTSESGFLNSLSSDDTSSLSSNHDHLTVPDKPAGSKIMDKEETKVSEDDEMEKLYKSLEQASLSPLGDRRPSTKKELRKSFVKRCKNPSINEKLHKIRTLNSTLKCKEHDLAMINQLLDDPKLTARKYREWKVMNTLLIQDIYQQQRASPAPDDTDDTPQELKKSPSSPSVENSI.

One can recognise an SAM domain in the interval 7 to 72; that stretch reads WSPKQVVDWT…LEAVDLLCAL (66 aa). In terms of domain architecture, CRIC spans 80 to 174; the sequence is NMKNLVLKLR…TTVQKDCFVA (95 aa). The PDZ domain maps to 211–293; the sequence is EVHLPNIKPG…GVVLLLKKRP (83 aa). 2 disordered regions span residues 309–334 and 347–390; these read WKPP…DTSL and PPPP…FLDQ. Positions 332–457 constitute a DUF1170 domain; it reads TSLKKEKSAI…ARPRGHGRKA (126 aa). Phosphoserine is present on Ser383. The PH domain occupies 503 to 602; that stretch reads HADCQGWLYK…WLNKLGSAVI (100 aa). Disordered regions lie at residues 605 to 687, 735 to 770, and 868 to 899; these read ESTT…PDTV, LSSD…TKVS, and QQQR…ENSI. Residues 613-624 are compositionally biased toward acidic residues; that stretch reads CYSESEQEDPEI. Low complexity predominate over residues 634 to 662; sequence ASQTQSLTAQQASSSSPSLSGTSYSFSSL. The span at 663-676 shows a compositional bias: polar residues; sequence ENTVKTPSSFPSSL. Residues 735–745 show a composition bias toward low complexity; the sequence is LSSDDTSSLSS. Residues 761–770 are compositionally biased toward basic and acidic residues; it reads IMDKEETKVS. The segment at 851-899 is required for interaction with CYTH2; that stretch reads KYREWKVMNTLLIQDIYQQQRASPAPDDTDDTPQELKKSPSSPSVENSI. Ser873 carries the post-translational modification Phosphoserine. The segment covering 889-899 has biased composition (polar residues); sequence SPSSPSVENSI.

This sequence belongs to the CNKSR family.

Its function is as follows. Required for hepatocyte growth factor (HGF)-dependent activation of Arf6 and HGF-stimulated cell migration. The sequence is that of CNK3/IPCEF1 fusion protein (CNK3/IPCEF1) from Homo sapiens (Human).